The following is a 525-amino-acid chain: MEETIGRGTWIDKLAHELIEREKALGRSTDMINVESGLGASGIPHMGSLGDAVRAYGVGLALGDMGHAFKLIAYSDDLDGLRKVPEGMPSSLEEHIARPVSAIPDPYGCHDSYGMHMSGLLLEGLDALNIEYDFRRARDTYRDGLLSEQIHGILSSSSKIGEKIAEMVGQEKFRSSLPYFAVCGQCGKMYTAEAVEYVADSRKVRYRCADAKVGGKQVAGCGHEGEADIGGAGGKLAWKVEFAARWQAFDVRFEAYGKDIMDSVRINDWVSDEILSNPHPHHARYEMFLDKGGKKISKSSGNVVTPQKWLRYGTPQSILLLMYKRITGARELGLEDVPALMDEYGDLQREYFAGGGRGGKAREAKNRGLFEYANLLVKQAGPRPHAAYRLLVELSRLFKEDRAERVTKKLVEYGVVDGPSPEIERLIGLAGNYADDMYAAERSDIELDEATKGALSELVELLGSAPGDGLQDAIYGIAKSHGVPPRDFFRALYRIILDTPSGPRIGPFIEDIGREKVAGMIRGRL.

Positions 40–48 (ASGIPHMGS) match the 'HIGH' region motif. The 'KMSKS' region signature appears at 295–299 (KISKS). An ATP-binding site is contributed by lysine 298.

Belongs to the class-I aminoacyl-tRNA synthetase family.

The protein localises to the cytoplasm. It catalyses the reaction tRNA(Lys) + L-lysine + ATP = L-lysyl-tRNA(Lys) + AMP + diphosphate. This chain is Lysine--tRNA ligase (lysS), found in Cenarchaeum symbiosum (strain A).